The following is a 198-amino-acid chain: Thioredoxin reductase-like selenoprotein T homolog CG3887 (198 aa).

Residues M1–A25 form the signal peptide. C49 and C52 form a disulfide bridge.

Belongs to the SelWTH family. SELT subfamily.

The catalysed reaction is [thioredoxin]-dithiol + NADP(+) = [thioredoxin]-disulfide + NADPH + H(+). Probably has thioredoxin reductase-like oxidoreductase activity. This chain is Thioredoxin reductase-like selenoprotein T homolog CG3887, found in Drosophila melanogaster (Fruit fly).